Reading from the N-terminus, the 486-residue chain is N-succinylglutamate 5-semialdehyde dehydrogenase (486 aa).

Position 220–225 (220–225) interacts with NAD(+); that stretch reads GSSRTG. Residues glutamate 243 and cysteine 277 contribute to the active site.

This sequence belongs to the aldehyde dehydrogenase family. AstD subfamily.

The catalysed reaction is N-succinyl-L-glutamate 5-semialdehyde + NAD(+) + H2O = N-succinyl-L-glutamate + NADH + 2 H(+). The protein operates within amino-acid degradation; L-arginine degradation via AST pathway; L-glutamate and succinate from L-arginine: step 4/5. Its function is as follows. Catalyzes the NAD-dependent reduction of succinylglutamate semialdehyde into succinylglutamate. This chain is N-succinylglutamate 5-semialdehyde dehydrogenase, found in Shewanella sediminis (strain HAW-EB3).